The primary structure comprises 167 residues: Photosystem I assembly protein Ycf3 (167 aa).

3 TPR repeats span residues 35–68 (AFAY…EVDA), 72–105 (SYIL…NPSL), and 120–153 (GEQA…APTS).

Belongs to the Ycf3 family.

It is found in the plastid. It localises to the chloroplast thylakoid membrane. Essential for the assembly of the photosystem I (PSI) complex. May act as a chaperone-like factor to guide the assembly of the PSI subunits. The protein is Photosystem I assembly protein Ycf3 of Chlorokybus atmophyticus (Soil alga).